A 271-amino-acid chain; its full sequence is Tropinone reductase homolog At2g29360 (271 aa).

22 to 46 (LVTGGSKGIGEAVVEELATLGARIH) contacts NADP(+). Ser155 contributes to the substrate binding site. Tyr168 functions as the Proton acceptor in the catalytic mechanism.

This sequence belongs to the short-chain dehydrogenases/reductases (SDR) family. SDR65C subfamily.

Functionally, oxidoreductase active on cyclic ketones, but not on tropinone or nortropinone. The polypeptide is Tropinone reductase homolog At2g29360 (Arabidopsis thaliana (Mouse-ear cress)).